A 55-amino-acid polypeptide reads, in one-letter code: Small ribosomal subunit protein eS31 (55 aa).

C21, C24, C39, and C42 together coordinate Zn(2+). The C4-type zinc-finger motif lies at 21-42 (CPRCGPGVFLAEHADRFTCGRC).

The protein belongs to the eukaryotic ribosomal protein eS31 family. Part of the 30S ribosomal subunit. Zn(2+) is required as a cofactor.

The sequence is that of Small ribosomal subunit protein eS31 from Thermoplasma volcanium (strain ATCC 51530 / DSM 4299 / JCM 9571 / NBRC 15438 / GSS1).